Reading from the N-terminus, the 345-residue chain is MVDEKRQKAIELALKQIDKAFGKGALVRLGDKQVEKIDSISTGSLGLDMALGIGGVPKGRIIEIYGPESSGKTTLSLQIVAECQRNGGICAFIDAEHALDVYYAKRLGVDTENLLVSQPDTGEQALEILETLTRSGAVDLIVIDSVAALTPKAEIEGDMGDQHVGLQARLMSHALRKITGVLHKMNATLIFINQIRMKIGTMGYGSPETTTGGNALKFYASVRIDVRRVATLKQNDQQIGNRTKAKVVKNKVAPPFREAEFDIMFGEGISKEGEIIDYGIKLDIIDKSGAWLSYNDKKLGQGRENAKIVLKENKSLADEITAKIKEQIGSKDEILPLPDEPETDE.

66 to 73 (GPESSGKT) contributes to the ATP binding site.

It belongs to the RecA family.

Its subcellular location is the cytoplasm. Can catalyze the hydrolysis of ATP in the presence of single-stranded DNA, the ATP-dependent uptake of single-stranded DNA by duplex DNA, and the ATP-dependent hybridization of homologous single-stranded DNAs. It interacts with LexA causing its activation and leading to its autocatalytic cleavage. The protein is Protein RecA of Helicobacter hepaticus (strain ATCC 51449 / 3B1).